Reading from the N-terminus, the 215-residue chain is Adenylate kinase (215 aa).

Residue G10 to T15 coordinates ATP. Residues S30 to V59 are NMP. Residues T31, R36, G57–V59, G85–R88, and Q92 contribute to the AMP site. Positions G122 to D159 are LID. ATP-binding positions include R123 and T132–Y133. 2 residues coordinate AMP: R156 and R167. Q200 contacts ATP.

The protein belongs to the adenylate kinase family. As to quaternary structure, monomer.

Its subcellular location is the cytoplasm. It catalyses the reaction AMP + ATP = 2 ADP. Its pathway is purine metabolism; AMP biosynthesis via salvage pathway; AMP from ADP: step 1/1. Its function is as follows. Catalyzes the reversible transfer of the terminal phosphate group between ATP and AMP. Plays an important role in cellular energy homeostasis and in adenine nucleotide metabolism. The sequence is that of Adenylate kinase from Neisseria meningitidis serogroup C (strain 053442).